The following is a 535-amino-acid chain: CTP synthase (535 aa).

Positions 1 to 266 (MKTKFIFITG…DEQVVEKLNI (266 aa)) are amidoligase domain. S14 is a binding site for CTP. S14 serves as a coordination point for UTP. Residues 15-20 (SIGKGL) and D72 each bind ATP. Positions 72 and 140 each coordinate Mg(2+). CTP-binding positions include 147–149 (DIE), 187–192 (KTKPTQ), and K223. UTP contacts are provided by residues 187–192 (KTKPTQ) and K223. Residues 292–534 (RIAIVGKYVN…IGASLTHRNQ (243 aa)) form the Glutamine amidotransferase type-1 domain. Position 354 (G354) interacts with L-glutamine. Residue C381 is the Nucleophile; for glutamine hydrolysis of the active site. L-glutamine-binding positions include 382–385 (LGMQ), E405, and R462. Residues H507 and E509 contribute to the active site.

It belongs to the CTP synthase family. Homotetramer.

It carries out the reaction UTP + L-glutamine + ATP + H2O = CTP + L-glutamate + ADP + phosphate + 2 H(+). The enzyme catalyses L-glutamine + H2O = L-glutamate + NH4(+). The catalysed reaction is UTP + NH4(+) + ATP = CTP + ADP + phosphate + 2 H(+). Its pathway is pyrimidine metabolism; CTP biosynthesis via de novo pathway; CTP from UDP: step 2/2. Its activity is regulated as follows. Allosterically activated by GTP, when glutamine is the substrate; GTP has no effect on the reaction when ammonia is the substrate. The allosteric effector GTP functions by stabilizing the protein conformation that binds the tetrahedral intermediate(s) formed during glutamine hydrolysis. Inhibited by the product CTP, via allosteric rather than competitive inhibition. Functionally, catalyzes the ATP-dependent amination of UTP to CTP with either L-glutamine or ammonia as the source of nitrogen. Regulates intracellular CTP levels through interactions with the four ribonucleotide triphosphates. The chain is CTP synthase from Trichlorobacter lovleyi (strain ATCC BAA-1151 / DSM 17278 / SZ) (Geobacter lovleyi).